The sequence spans 765 residues: Phosphoribosylformylglycinamidine synthase subunit PurL (765 aa).

The active site involves histidine 59. Residues tyrosine 62 and lysine 104 each coordinate ATP. A Mg(2+)-binding site is contributed by glutamate 106. Residues 107–110 (SHNH) and arginine 129 contribute to the substrate site. The active-site Proton acceptor is the histidine 108. Residue aspartate 130 coordinates Mg(2+). Residue glutamine 254 participates in substrate binding. Mg(2+) is bound at residue aspartate 282. Substrate is bound at residue 326-328 (ESQ). The ATP site is built by asparagine 522 and glycine 559. Residue asparagine 560 coordinates Mg(2+). Serine 562 is a binding site for substrate.

This sequence belongs to the FGAMS family. In terms of assembly, monomer. Part of the FGAM synthase complex composed of 1 PurL, 1 PurQ and 2 PurS subunits.

Its subcellular location is the cytoplasm. It catalyses the reaction N(2)-formyl-N(1)-(5-phospho-beta-D-ribosyl)glycinamide + L-glutamine + ATP + H2O = 2-formamido-N(1)-(5-O-phospho-beta-D-ribosyl)acetamidine + L-glutamate + ADP + phosphate + H(+). Its pathway is purine metabolism; IMP biosynthesis via de novo pathway; 5-amino-1-(5-phospho-D-ribosyl)imidazole from N(2)-formyl-N(1)-(5-phospho-D-ribosyl)glycinamide: step 1/2. Functionally, part of the phosphoribosylformylglycinamidine synthase complex involved in the purines biosynthetic pathway. Catalyzes the ATP-dependent conversion of formylglycinamide ribonucleotide (FGAR) and glutamine to yield formylglycinamidine ribonucleotide (FGAM) and glutamate. The FGAM synthase complex is composed of three subunits. PurQ produces an ammonia molecule by converting glutamine to glutamate. PurL transfers the ammonia molecule to FGAR to form FGAM in an ATP-dependent manner. PurS interacts with PurQ and PurL and is thought to assist in the transfer of the ammonia molecule from PurQ to PurL. This Thermobifida fusca (strain YX) protein is Phosphoribosylformylglycinamidine synthase subunit PurL.